A 175-amino-acid polypeptide reads, in one-letter code: NADH-ubiquinone oxidoreductase chain 6 (175 aa).

The next 6 membrane-spanning stretches (helical) occupy residues 1 to 21 (MMYI…GFSS), 25 to 45 (PVYG…IIMG), 51 to 71 (LGLV…GYTI), 87 to 107 (VVLG…MWLF), 112 to 132 (ELVG…EGGF), and 148 to 168 (YGFW…FIAI).

This sequence belongs to the complex I subunit 6 family. Core subunit of respiratory chain NADH dehydrogenase (Complex I) which is composed of 45 different subunits.

It is found in the mitochondrion inner membrane. It catalyses the reaction a ubiquinone + NADH + 5 H(+)(in) = a ubiquinol + NAD(+) + 4 H(+)(out). In terms of biological role, core subunit of the mitochondrial membrane respiratory chain NADH dehydrogenase (Complex I) which catalyzes electron transfer from NADH through the respiratory chain, using ubiquinone as an electron acceptor. Essential for the catalytic activity and assembly of complex I. This Loxodonta africana (African elephant) protein is NADH-ubiquinone oxidoreductase chain 6 (MT-ND6).